A 564-amino-acid chain; its full sequence is Protein CPR-5 (564 aa).

The interval 1–87 is disordered; the sequence is MEALLLPPSP…TSNSNSTKRV (87 aa). Residues 12-28 show a composition bias toward polar residues; it reads PQNQITNPANSKPNHQS. Basic and acidic residues predominate over residues 29–38; the sequence is GDVHKDETMM. Positions 69–84 are enriched in low complexity; the sequence is SSSYCSTSSTSNSNST. 5 helical membrane passes run 347-367, 411-431, 443-463, 472-492, and 526-546; these read IMDW…LGVY, VRVW…TYFL, PISF…KLCV, LWLI…VFTL, and VYVV…FATF.

Interacts with SIM and SMR1. In terms of tissue distribution, ubiquitous.

The protein localises to the membrane. Its subcellular location is the nucleus membrane. Functionally, may play a role in transcriptional processes. Negatively regulates the senescence and chlorotic lesions induced by biotic (e.g. pathogens) and abiotic (e.g. sugars, darkness) agents, probably by controlling programmed cell death (pcd). Negative regulator of plant programmed cell death (PCD) and effector-triggered immunity (ETI). Promotes cell division and endoreduplication (e.g. in trichomes). The protein is Protein CPR-5 of Arabidopsis thaliana (Mouse-ear cress).